We begin with the raw amino-acid sequence, 583 residues long: MKAIIVLLMVVTSNADRICTGITSSNSPHVVKTATQGEVNVTGVIPLTTTPTKSHFANLKGTKTRGKLCPNCLNCTDLDVALGRPKCMGTIPSAKASILHEVKPVTSGCFPIMHDRTKIRQLPNLLRGYENIRLSTRNVINAERAPGGPYIIGTSGSCPNVTNGNGFFATMAWAVPKDNKTATNPLTVEVPYICTKGEDQITVWGFHSDTETQMVKLYGDSKPQKFTSSANGVTTHYVSQIGGFPNQTEDGGLPQSGRIVVDYMVQKPGKTGTIVYQRGVLLPQKVWCASGRSKVIKGSLPLIGEADCLHEKYGGLNKSKPYYTGEHAKAIGNCPIWVKTPLKLANGTKYRPPAKLLKERGFFGAIAGFLEGGWEGMIAGWHGYTSHGAHGVAVAADLKSTQEAINKITKNLNSLSELEVKNLQRLSGAMDELHNEILELDEKVDDLRADTISSQIELAVLLSNEGIINSEDEHLLALERKLKKMLGPSAVDIGNGCFETKHKCNQTCLDRIAAGTFNAGEFSLPTFDSLNITAASLNDDGLDNHTILLYYSTAASSLAVTLMIAIFIVYMVSRDNVSCSICL.

The signal sequence occupies residues 1 to 15 (MKAIIVLLMVVTSNA). Residues 16-551 (DRICTGITSS…LDNHTILLYY (536 aa)) are Extracellular-facing. 4 disulfide bridges follow: Cys19-Cys497, Cys75-Cys87, Cys109-Cys158, and Cys504-Cys508. Residues Asn40 and Asn74 are each glycosylated (N-linked (GlcNAc...) asparagine; by host). N-linked (GlcNAc...) asparagine; by host glycans are attached at residues Asn160, Asn179, Asn246, Asn317, Asn346, Asn505, Asn531, and Asn544. Residues 552–572 (STAASSLAVTLMIAIFIVYMV) form a helical membrane-spanning segment. Residues 573–583 (SRDNVSCSICL) are Cytoplasmic-facing. 2 S-palmitoyl cysteine; by host lipidation sites follow: Cys579 and Cys582.

This sequence belongs to the influenza viruses hemagglutinin family. As to quaternary structure, homotrimer of disulfide-linked HA1-HA2. Post-translationally, palmitoylated. In terms of processing, in natural infection, inactive HA is matured into HA1 and HA2 outside the cell by one or more trypsin-like, arginine-specific endoprotease secreted by the bronchial epithelial cells. One identified protease that may be involved in this process is secreted in lungs by club cells.

Its subcellular location is the virion membrane. The protein localises to the host apical cell membrane. Its function is as follows. Binds to sialic acid-containing receptors on the cell surface, bringing about the attachment of the virus particle to the cell. Plays a major role in the determination of host range restriction and virulence. Class I viral fusion protein. Responsible for penetration of the virus into the cell cytoplasm by mediating the fusion of the membrane of the endocytosed virus particle with the endosomal membrane. Low pH in endosomes induce an irreversible conformational change in HA2, releasing the fusion hydrophobic peptide. Several trimers are required to form a competent fusion pore. This chain is Hemagglutinin, found in Influenza B virus (strain B/Singapore/222/1979).